The primary structure comprises 149 residues: Large ribosomal subunit protein uL11 (149 aa).

It belongs to the universal ribosomal protein uL11 family. In terms of assembly, part of the ribosomal stalk of the 50S ribosomal subunit. Interacts with L10 and the large rRNA to form the base of the stalk. L10 forms an elongated spine to which L12 dimers bind in a sequential fashion forming a multimeric L10(L12)X complex. One or more lysine residues are methylated.

Forms part of the ribosomal stalk which helps the ribosome interact with GTP-bound translation factors. This Methylobacterium nodulans (strain LMG 21967 / CNCM I-2342 / ORS 2060) protein is Large ribosomal subunit protein uL11.